We begin with the raw amino-acid sequence, 341 residues long: Dihydroorotate dehydrogenase (quinone) (341 aa).

Residues 62 to 66 (AGMDK) and T86 each bind FMN. K66 provides a ligand contact to substrate. 111-115 (NRMGF) is a binding site for substrate. Residues N139 and N172 each coordinate FMN. Substrate is bound at residue N172. S175 (nucleophile) is an active-site residue. N177 is a substrate binding site. 2 residues coordinate FMN: K217 and T245. 246-247 (NT) is a binding site for substrate. FMN is bound by residues G268, G297, and 318 to 319 (YS).

It belongs to the dihydroorotate dehydrogenase family. Type 2 subfamily. As to quaternary structure, monomer. Requires FMN as cofactor.

It localises to the cell membrane. It carries out the reaction (S)-dihydroorotate + a quinone = orotate + a quinol. The protein operates within pyrimidine metabolism; UMP biosynthesis via de novo pathway; orotate from (S)-dihydroorotate (quinone route): step 1/1. In terms of biological role, catalyzes the conversion of dihydroorotate to orotate with quinone as electron acceptor. The chain is Dihydroorotate dehydrogenase (quinone) from Shewanella loihica (strain ATCC BAA-1088 / PV-4).